A 478-amino-acid polypeptide reads, in one-letter code: Stromelysin-1 (478 aa).

An N-terminal signal peptide occupies residues 1–17 (MKTLPTLLLLCVALCSA). Positions 18 to 100 (YPLDGASRDA…PRCGVPDVGH (83 aa)) are cleaved as a propeptide — activation peptide. Positions 91–98 (PRCGVPDV) match the Cysteine switch motif. Cys93 contacts Zn(2+). Ca(2+) contacts are provided by Asp125 and Asp159. Zn(2+) contacts are provided by His169 and Asp171. Residues Asp176, Gly177, Gly179, and Val181 each coordinate Ca(2+). His184 contacts Zn(2+). Residues Gly191, Asn193, and Asp195 each coordinate Ca(2+). His197 serves as a coordination point for Zn(2+). 3 residues coordinate Ca(2+): Asp199, Asp200, and Glu202. His219 provides a ligand contact to Zn(2+). Glu220 is a catalytic residue. 2 residues coordinate Zn(2+): His223 and His229. 4 Hemopexin repeats span residues 288 to 337 (PVMC…WPSL), 338 to 384 (PSAV…GFPS), 386 to 434 (IRKI…FPGI), and 435 to 478 (NPKI…WFQC). A disulfide bridge connects residues Cys291 and Cys478. Asp298 contributes to the Ca(2+) binding site. Ca(2+) contacts are provided by Asp390 and Asp439.

The protein belongs to the peptidase M10A family. The cofactor is Ca(2+). Zn(2+) serves as cofactor.

The protein resides in the secreted. It is found in the extracellular space. The protein localises to the extracellular matrix. It carries out the reaction Preferential cleavage where P1', P2' and P3' are hydrophobic residues.. Functionally, metalloproteinase with a rather broad substrate specificity that can degrade fibronectin, laminin, gelatins of type I, III, IV, and V; collagens III, IV, X, and IX, and cartilage proteoglycans. Activates different molecules including growth factors, plasminogen or other matrix metalloproteinases such as MMP9. Once released into the extracellular matrix (ECM), the inactive pro-enzyme is activated by the plasmin cascade signaling pathway. Also acts intracellularly. For example, in dopaminergic neurons, gets activated by the serine protease HTRA2 upon stress and plays a pivotal role in DA neuronal degeneration by mediating microglial activation and alpha-synuclein/SNCA cleavage. In addition, plays a role in immune response and possesses antiviral activity against various viruses. Mechanistically, translocates from the cytoplasm into the cell nucleus upon virus infection to influence NF-kappa-B activities. The chain is Stromelysin-1 (MMP3) from Oryctolagus cuniculus (Rabbit).